We begin with the raw amino-acid sequence, 341 residues long: MSNSNRPAVVITDSTLRDGNHAVSHQLRASDIASYCQWAEAAHVPIVEVGHGNGLAASSLQVGLAACSDQMMLETARMHLKTSRLGIHVIPGFATVAKDLKPALDLGVDVVRVASHCTEADITERHIGYCRDQGKTVFGVLMMSHMAEVPVLCEEAKKLEAYGAEAVIIMDSSGTYLPLDVTRRVSALKESIGIGVGFHAHNNLGMAIANSIAAIEAGAVLIDGSIRGFGAGAGNAQLETLVAVLERLGVATGIDLYRVLDAGDFAETLFVKELPVVRSLSIVSGLSGVFSGFSKPVLRIASENGVDPRDVFFELGRRRAVAGQEDLILEVVKEIKSRGNR.

The 252-residue stretch at 9–260 (VVITDSTLRD…ATGIDLYRVL (252 aa)) folds into the Pyruvate carboxyltransferase domain. 17-18 (RD) contributes to the substrate binding site. Residue Asp-18 participates in Mn(2+) binding. The Proton acceptor role is filled by His-21. Residues Ser-172 and His-199 each coordinate substrate. 2 residues coordinate Mn(2+): His-199 and His-201.

This sequence belongs to the 4-hydroxy-2-oxovalerate aldolase family.

It carries out the reaction (S)-4-hydroxy-2-oxopentanoate = acetaldehyde + pyruvate. The protein is 4-hydroxy-2-oxovalerate aldolase of Spirochaeta aurantia.